We begin with the raw amino-acid sequence, 502 residues long: MKIGFDHEKYLEEQSKYILERVDSYDKLYLEFGGKLFNDRHAMRVLPGFDENAKIKLLHKLKEKVEVVICVYAGDIERNKIRGDFGITYDMDVLRLIDDLRTYELEVNSVVITRYNGQPATTVFINKLERRGIKVYKHKSTKGYPTDVDTIVSEEGYGQNPYIETTKPIVVVTAPGPGSGKLATCLSQLYHESKRGNAAGYSKFETFPVWNVPLKHPLNIAYEAATVDLKDVNMLDSFHMDAYNKVTVNYNRDIESFPVLKRIIEKITGKESIYKSPTDMGVNRVGFGIVDDDAVKEASKQEIIRRYFKTGCDYKKGYADKETFDRSKLIMEEVDLKETDRKVVLPAREKSAKLKMATDENEICPVVALELSDGTILTGKSSDLMDGAAAVIINAIKYLANISDDIYLISPVILEPIMNLKSKTFNEKNISLNCEEVLTALSISAATNPTAQVAMEKLPLLRGCQAHATTILSRADDTTLGKLGVDVTCDPNYPSESLYYNN.

Belongs to the UPF0371 family.

The chain is UPF0371 protein CLH_2534 from Clostridium botulinum (strain Alaska E43 / Type E3).